The following is a 117-amino-acid chain: Ribosome maturation factor RimP (117 aa).

The protein belongs to the RimP family.

It is found in the cytoplasm. Its function is as follows. Required for maturation of 30S ribosomal subunits. The polypeptide is Ribosome maturation factor RimP (Rickettsia prowazekii (strain Madrid E)).